Reading from the N-terminus, the 274-residue chain is Thiamine kinase (274 aa).

It belongs to the thiamine kinase family.

The enzyme catalyses thiamine + ATP = thiamine phosphate + ADP + H(+). Its pathway is cofactor biosynthesis; thiamine diphosphate biosynthesis; thiamine phosphate from thiamine: step 1/1. Catalyzes the ATP-dependent phosphorylation of thiamine to thiamine phosphate. Is involved in thiamine salvage. In Salmonella gallinarum (strain 287/91 / NCTC 13346), this protein is Thiamine kinase.